Consider the following 168-residue polypeptide: Peptide deformylase 1 (168 aa).

The Fe cation site is built by Cys-91 and His-133. Glu-134 is an active-site residue. Fe cation is bound at residue His-137.

The protein belongs to the polypeptide deformylase family. Requires Fe(2+) as cofactor.

It catalyses the reaction N-terminal N-formyl-L-methionyl-[peptide] + H2O = N-terminal L-methionyl-[peptide] + formate. In terms of biological role, removes the formyl group from the N-terminal Met of newly synthesized proteins. Requires at least a dipeptide for an efficient rate of reaction. N-terminal L-methionine is a prerequisite for activity but the enzyme has broad specificity at other positions. This is Peptide deformylase 1 from Vibrio vulnificus (strain YJ016).